Reading from the N-terminus, the 701-residue chain is MFNIHTKSVQFGEKTITLETGRVARQANGAVMVTYGDTVVLVTAVAETSMRAGQDFFPLSVHYQEKFWAAGKIPGGFIKRETRPSEREVLTSRLIDRPIRPLFPKGFMNETQVVAQVLSYDPDYPSDIAALIGCSAALALSGVPFEGPIGGARVGFIDGKPVLNPTVDQLAASRLDLVVAGTRSAVTMVESEVDFLSEDEMLDCVMFAHESFQPVITAIEELVAEAGKPRWVVEPVQVNEALLAEMNDKFAAQVTEAYAIPEKMARYEAVAQVKAAAMEALGTIEVDGQSVKRSEEVASLFKKIESRTLRQNVLQGKRVDGRGLTDIRPIACEVSILPRVHGTALFTRGETQAIATVTLGTSRDEQIVETLSGEYRDRFYLNYTFPPYCVGETGRMGAPGRREIGHGKLATRALTAIVPSAEVFPYTLRITSEITESNGSSSMATVCGAVLAMQDAGVPIKAPVAGIAMGLVKEGDAYAVLSDILGDEDHLGDMDFKVAGNADGITALQMDIKITGITREIMAKALEQARAGRLHILGEMGKAMTTHRAEMSAYAPRIHTMKIHPDKIREVIGSGGKVIRSITEETGCAIDIEDDGTIRIASSDQASAEQAVKIIKSIVAEVEKGQVYEGKVVRITDFGAFVNILPNKDGLVHISQLANRRVQNVTDVVKEGDVVTVKVLDVDRQGRVKLTMKEMEEGAAE.

Mg(2+) contacts are provided by Asp-489 and Asp-495. The region spanning 556-615 (PRIHTMKIHPDKIREVIGSGGKVIRSITEETGCAIDIEDDGTIRIASSDQASAEQAVKII) is the KH domain. One can recognise an S1 motif domain in the interval 625 to 693 (GQVYEGKVVR…RQGRVKLTMK (69 aa)).

It belongs to the polyribonucleotide nucleotidyltransferase family. It depends on Mg(2+) as a cofactor.

The protein localises to the cytoplasm. It carries out the reaction RNA(n+1) + phosphate = RNA(n) + a ribonucleoside 5'-diphosphate. Its function is as follows. Involved in mRNA degradation. Catalyzes the phosphorolysis of single-stranded polyribonucleotides processively in the 3'- to 5'-direction. The sequence is that of Polyribonucleotide nucleotidyltransferase from Magnetococcus marinus (strain ATCC BAA-1437 / JCM 17883 / MC-1).